Reading from the N-terminus, the 382-residue chain is Pyrimidine monooxygenase RutA (382 aa).

Residues 68 to 69 (IK), Asn-134, Glu-143, 159 to 160 (RY), and Ser-209 contribute to the FMN site.

It belongs to the NtaA/SnaA/DszA monooxygenase family. RutA subfamily.

The catalysed reaction is uracil + FMNH2 + NADH + O2 = (Z)-3-ureidoacrylate + FMN + NAD(+) + H2O + H(+). The enzyme catalyses thymine + FMNH2 + NADH + O2 = (Z)-2-methylureidoacrylate + FMN + NAD(+) + H2O + H(+). In terms of biological role, catalyzes the pyrimidine ring opening between N-3 and C-4 by an unusual flavin hydroperoxide-catalyzed mechanism, adding oxygen atoms in the process to yield ureidoacrylate peracid, that immediately reacts with FMN forming ureidoacrylate and FMN-N(5)-oxide. The FMN-N(5)-oxide reacts spontaneously with NADH to produce FMN. Requires the flavin reductase RutF to regenerate FMN in vivo. This chain is Pyrimidine monooxygenase RutA, found in Escherichia coli O81 (strain ED1a).